The following is a 350-amino-acid chain: WD repeat-containing protein DWA2 (350 aa).

WD repeat units lie at residues 39 to 79 (KEEN…FDQR), 118 to 158 (AHVG…KSAE), 166 to 205 (GMRHSLSGGAWNPHDVNSVAATSESSIQFWDLRTMKKNNS), 206 to 246 (IERA…FPVQ), 250 to 290 (GHTH…EHKT), and 311 to 350 (DYEDSVYGLAWSSREPWIFASLSYDGRVVIESVKPFLPRR).

As to quaternary structure, interacts with ABI5 and DDB1A and DWA1.

It localises to the nucleus. The protein operates within protein modification; protein ubiquitination. Its function is as follows. Component of the CUL4-RBX1-DDB1-DWA1/DWA2 E3 ubiquitin-protein ligase complex that acts as a negative regulator in abscisic acid (ABA) signaling. May function as the substrate recognition module within this complex leading to ABI5 degradation. Functionally redundant with DWA1. In Arabidopsis thaliana (Mouse-ear cress), this protein is WD repeat-containing protein DWA2 (DWA2).